A 152-amino-acid polypeptide reads, in one-letter code: Deoxyuridine 5'-triphosphate nucleotidohydrolase (152 aa).

Residues 71–73 (RSG), Asn-84, 88–90 (LID), and Met-98 each bind substrate.

It belongs to the dUTPase family. Requires Mg(2+) as cofactor.

It carries out the reaction dUTP + H2O = dUMP + diphosphate + H(+). Its pathway is pyrimidine metabolism; dUMP biosynthesis; dUMP from dCTP (dUTP route): step 2/2. Functionally, this enzyme is involved in nucleotide metabolism: it produces dUMP, the immediate precursor of thymidine nucleotides and it decreases the intracellular concentration of dUTP so that uracil cannot be incorporated into DNA. This Salmonella arizonae (strain ATCC BAA-731 / CDC346-86 / RSK2980) protein is Deoxyuridine 5'-triphosphate nucleotidohydrolase.